Reading from the N-terminus, the 968-residue chain is RNA polymerase-associated protein RapA (968 aa).

The Helicase ATP-binding domain maps to 164–334; the sequence is DVGRRHAPRV…FARLRLLDPN (171 aa). 177-184 is an ATP binding site; that stretch reads DEVGLGKT. Residues 280–283 carry the DEAH box motif; sequence DEAH. Residues 490–662 form the Helicase C-terminal domain; the sequence is RVEWLMGYLT…YLASPDETEG (173 aa).

This sequence belongs to the SNF2/RAD54 helicase family. RapA subfamily. Interacts with the RNAP. Has a higher affinity for the core RNAP than for the holoenzyme. Its ATPase activity is stimulated by binding to RNAP.

Its function is as follows. Transcription regulator that activates transcription by stimulating RNA polymerase (RNAP) recycling in case of stress conditions such as supercoiled DNA or high salt concentrations. Probably acts by releasing the RNAP, when it is trapped or immobilized on tightly supercoiled DNA. Does not activate transcription on linear DNA. Probably not involved in DNA repair. The sequence is that of RNA polymerase-associated protein RapA from Escherichia coli O127:H6 (strain E2348/69 / EPEC).